The chain runs to 246 residues: Sulfate transporter CysZ (246 aa).

Transmembrane regions (helical) follow at residues 24–44 (LFVLIPLTLNLLVFALLIGFA), 69–89 (IVWPLFVLLVLVIVFFTFTMV), 148–168 (LLVLSFVPGVNLIATPLWILF), and 214–234 (LLIPLVNLVMMPAAVAGATLF).

Belongs to the CysZ family.

The protein localises to the cell inner membrane. Functionally, high affinity, high specificity proton-dependent sulfate transporter, which mediates sulfate uptake. Provides the sulfur source for the cysteine synthesis pathway. This chain is Sulfate transporter CysZ, found in Pseudomonas aeruginosa (strain ATCC 15692 / DSM 22644 / CIP 104116 / JCM 14847 / LMG 12228 / 1C / PRS 101 / PAO1).